The chain runs to 1396 residues: DNA-directed RNA polymerase subunit beta' (1396 aa).

Zn(2+) contacts are provided by cysteine 70, cysteine 72, cysteine 85, and cysteine 88. Residues aspartate 460, aspartate 462, and aspartate 464 each coordinate Mg(2+). Zn(2+) contacts are provided by cysteine 814, cysteine 888, cysteine 895, and cysteine 898.

The protein belongs to the RNA polymerase beta' chain family. In terms of assembly, the RNAP catalytic core consists of 2 alpha, 1 beta, 1 beta' and 1 omega subunit. When a sigma factor is associated with the core the holoenzyme is formed, which can initiate transcription. Mg(2+) is required as a cofactor. It depends on Zn(2+) as a cofactor.

It catalyses the reaction RNA(n) + a ribonucleoside 5'-triphosphate = RNA(n+1) + diphosphate. DNA-dependent RNA polymerase catalyzes the transcription of DNA into RNA using the four ribonucleoside triphosphates as substrates. In Chromobacterium violaceum (strain ATCC 12472 / DSM 30191 / JCM 1249 / CCUG 213 / NBRC 12614 / NCIMB 9131 / NCTC 9757 / MK), this protein is DNA-directed RNA polymerase subunit beta'.